Consider the following 693-residue polypeptide: Glycine--tRNA ligase beta subunit (693 aa).

This sequence belongs to the class-II aminoacyl-tRNA synthetase family. As to quaternary structure, tetramer of two alpha and two beta subunits.

Its subcellular location is the cytoplasm. The catalysed reaction is tRNA(Gly) + glycine + ATP = glycyl-tRNA(Gly) + AMP + diphosphate. This Shouchella clausii (strain KSM-K16) (Alkalihalobacillus clausii) protein is Glycine--tRNA ligase beta subunit.